The following is a 155-amino-acid chain: RNA pyrophosphohydrolase (155 aa).

The Nudix hydrolase domain occupies 5–147 (KYRPNVAAII…KRQVYRQVIA (143 aa)). Residues 42–63 (GGIDEGETPLEALYRELLEEIG) carry the Nudix box motif.

The protein belongs to the Nudix hydrolase family. RppH subfamily. Requires a divalent metal cation as cofactor.

Functionally, accelerates the degradation of transcripts by removing pyrophosphate from the 5'-end of triphosphorylated RNA, leading to a more labile monophosphorylated state that can stimulate subsequent ribonuclease cleavage. The chain is RNA pyrophosphohydrolase from Helicobacter pylori (strain P12).